The primary structure comprises 132 residues: Agouti-signaling protein (132 aa).

Residues 1-22 form the signal peptide; sequence MDVTRLLLATLLVFLCFFTAYS. Residue Asn39 is glycosylated (N-linked (GlcNAc...) asparagine). Residues 57 to 88 form a disordered region; the sequence is KKSKQTSRKEAEKKRSSKKEASMKKVARPRTP. Basic and acidic residues predominate over residues 63-79; that stretch reads SRKEAEKKRSSKKEASM. Cystine bridges form between Cys93/Cys108, Cys100/Cys114, Cys107/Cys125, Cys111/Cys132, and Cys116/Cys123. An Agouti domain is found at 93 to 132; the sequence is CVATRDSCKPPAPACCDPCASCQCRFFRSACSCRVLSLNC.

It localises to the secreted. In terms of biological role, involved in the regulation of melanogenesis. The binding of ASP to MC1R precludes alpha-MSH initiated signaling and thus blocks production of cAMP, leading to a down-regulation of eumelanogenesis (brown/black pigment) and thus increasing synthesis of pheomelanin (yellow/red pigment). The protein is Agouti-signaling protein (ASIP) of Macaca assamensis (Assam macaque).